The chain runs to 550 residues: Dihydroxy-acid dehydratase (550 aa).

Aspartate 81 lines the Mg(2+) pocket. A [2Fe-2S] cluster-binding site is contributed by cysteine 122. Mg(2+) is bound by residues aspartate 123 and lysine 124. Lysine 124 carries the N6-carboxylysine modification. [2Fe-2S] cluster is bound at residue cysteine 194. Residue glutamate 442 participates in Mg(2+) binding. The active-site Proton acceptor is the serine 467.

This sequence belongs to the IlvD/Edd family. As to quaternary structure, homodimer. Requires [2Fe-2S] cluster as cofactor. Mg(2+) serves as cofactor.

It catalyses the reaction (2R)-2,3-dihydroxy-3-methylbutanoate = 3-methyl-2-oxobutanoate + H2O. The catalysed reaction is (2R,3R)-2,3-dihydroxy-3-methylpentanoate = (S)-3-methyl-2-oxopentanoate + H2O. Its pathway is amino-acid biosynthesis; L-isoleucine biosynthesis; L-isoleucine from 2-oxobutanoate: step 3/4. It functions in the pathway amino-acid biosynthesis; L-valine biosynthesis; L-valine from pyruvate: step 3/4. Its function is as follows. Functions in the biosynthesis of branched-chain amino acids. Catalyzes the dehydration of (2R,3R)-2,3-dihydroxy-3-methylpentanoate (2,3-dihydroxy-3-methylvalerate) into 2-oxo-3-methylpentanoate (2-oxo-3-methylvalerate) and of (2R)-2,3-dihydroxy-3-methylbutanoate (2,3-dihydroxyisovalerate) into 2-oxo-3-methylbutanoate (2-oxoisovalerate), the penultimate precursor to L-isoleucine and L-valine, respectively. In Methanoregula boonei (strain DSM 21154 / JCM 14090 / 6A8), this protein is Dihydroxy-acid dehydratase.